Consider the following 507-residue polypeptide: ATP synthase subunit alpha, chloroplastic (507 aa).

170–177 (GDRQTGKT) contributes to the ATP binding site. Phosphothreonine is present on Thr-257.

The protein belongs to the ATPase alpha/beta chains family. In terms of assembly, F-type ATPases have 2 components, CF(1) - the catalytic core - and CF(0) - the membrane proton channel. CF(1) has five subunits: alpha(3), beta(3), gamma(1), delta(1), epsilon(1). CF(0) has four main subunits: a, b, b' and c.

The protein localises to the plastid. Its subcellular location is the chloroplast thylakoid membrane. It carries out the reaction ATP + H2O + 4 H(+)(in) = ADP + phosphate + 5 H(+)(out). Functionally, produces ATP from ADP in the presence of a proton gradient across the membrane. The alpha chain is a regulatory subunit. The chain is ATP synthase subunit alpha, chloroplastic from Draba nemorosa (Woodland whitlowgrass).